A 121-amino-acid polypeptide reads, in one-letter code: C-X-C motif chemokine 11-6 (121 aa).

The first 20 residues, 1–20 (MKTLAAFLLLSCLIAGEVNG), serve as a signal peptide directing secretion. Intrachain disulfides connect C29–C56 and C31–C73. Residues 95–121 (QSVPHSTTTGTVKSSMTSSTSAPTAFK) are disordered. Over residues 100–115 (STTTGTVKSSMTSSTS) the composition is skewed to low complexity.

This sequence belongs to the intercrine alpha (chemokine CxC) family.

The protein localises to the secreted. Its function is as follows. Ligand for cxcr3.2. Chemotactic for macrophages. This is C-X-C motif chemokine 11-6 from Danio rerio (Zebrafish).